The chain runs to 291 residues: Elongation factor Ts (291 aa).

The interval 79-82 (TDFV) is involved in Mg(2+) ion dislocation from EF-Tu.

The protein belongs to the EF-Ts family.

It is found in the cytoplasm. Associates with the EF-Tu.GDP complex and induces the exchange of GDP to GTP. It remains bound to the aminoacyl-tRNA.EF-Tu.GTP complex up to the GTP hydrolysis stage on the ribosome. This chain is Elongation factor Ts, found in Roseobacter denitrificans (strain ATCC 33942 / OCh 114) (Erythrobacter sp. (strain OCh 114)).